Reading from the N-terminus, the 668-residue chain is COBRA-like protein 11 (668 aa).

The N-terminal stretch at 1–29 (MKKLRYVHLNLLLLLLPLINLQFPTLSLA) is a signal peptide. 12 N-linked (GlcNAc...) asparagine glycosylation sites follow: asparagine 69, asparagine 125, asparagine 254, asparagine 318, asparagine 329, asparagine 358, asparagine 412, asparagine 432, asparagine 473, asparagine 552, asparagine 560, and asparagine 579. Serine 636 carries the GPI-anchor amidated serine lipid modification. Residues 637-668 (SGMRLSGIRFLPSILLAITTFHAITDRLLTGV) constitute a propeptide, removed in mature form.

The protein belongs to the COBRA family. In terms of tissue distribution, mostly expressed in flowers, stamen, anthers and pollen, and, to a lower extent, possibly in roots, stems, leaves and siliques.

It is found in the cell membrane. Its function is as follows. Involved in the deposition of apical pectin cap and cellulose microfibrils in pollen tubes. Implicated in pollen tubes growth in the female transmitting tract of pistil and toward micropyles, via the perception of ovule guidance cues. This chain is COBRA-like protein 11, found in Arabidopsis thaliana (Mouse-ear cress).